The following is a 102-amino-acid chain: uncharacterized protein (102 aa).

Residues C10, C16, and C55 each contribute to the [3Fe-4S] cluster site. The tract at residues D66–V102 is disordered. Basic and acidic residues predominate over residues A82 to R93.

Requires [3Fe-4S] cluster as cofactor.

Its function is as follows. Electron transport protein for the cytochrome systems. This is an uncharacterized protein from Sinorhizobium fredii (strain NBRC 101917 / NGR234).